The chain runs to 318 residues: Small ribosomal subunit protein RACK1 (318 aa).

WD repeat units follow at residues 11 to 44 (GHRG…LSWG), 65 to 95 (GHSA…RLWN), 107 to 137 (GHTK…RVWN), 150 to 182 (AHTD…KVWD), 194 to 224 (GHTN…RLWD), 235 to 264 (AAGA…RIFD), and 282 to 315 (KKIV…WGVS).

It belongs to the WD repeat G protein beta family. Ribosomal protein RACK1 subfamily.

In Trypanosoma brucei brucei, this protein is Small ribosomal subunit protein RACK1.